Consider the following 284-residue polypeptide: Riboflavin transporter (284 aa).

2 EamA domains span residues 2–129 and 141–273; these read VAAC…LIII and LLPI…SLYL. Transmembrane regions (helical) follow at residues 26–46, 58–78, 82–102, 115–135, 136–156, 167–187, 195–215, and 247–267; these read SVII…PLLV, FGLH…WIYA, VPIW…ILCA, LLTT…WSDS, YTVY…YSVM, ASIS…LWLA, ITAP…FTAL, and GWIV…ALII.

The protein belongs to the drug/metabolite transporter (DMT) superfamily. 10 TMS drug/metabolite exporter (DME) (TC 2.A.7.3) family.

It localises to the cell membrane. Its function is as follows. Transports riboflavin into the cell. The polypeptide is Riboflavin transporter (Brucella anthropi (strain ATCC 49188 / DSM 6882 / CCUG 24695 / JCM 21032 / LMG 3331 / NBRC 15819 / NCTC 12168 / Alc 37) (Ochrobactrum anthropi)).